The following is a 442-amino-acid chain: UBX domain-containing protein 6 (442 aa).

A mediates interaction with LMAN1 region spans residues 1–10 (MKKFFQEIKA). The segment at 13 to 111 (KFKSAGPGQK…TNSVPEPKEE (99 aa)) is disordered. The residue at position 36 (S36) is a Phosphoserine. Positions 51-63 (EAQMAAAAALARL) are VCP/p97-interacting motif (VIM). The segment covering 52-61 (AQMAAAAALA) has biased composition (low complexity). Residues 90-105 (EATSSNNPGAPGTNSV) are compositionally biased toward polar residues. Positions 175–244 (VDTIAKYLDN…GQEEFYVLGE (70 aa)) constitute a PUB domain. Residues 332 to 408 (RKYTYALVRV…GLVPSALLTF (77 aa)) enclose the UBX domain.

As to quaternary structure, interacts with VCP through the PUB domain (via C-terminus) and VIM motif (via N-terminus); the interaction is direct. Forms a ternary complex with CAV1 and VCP. Interacts with SYVN1. Interacts with HERPUD1. Interacts with VCPKMT. May interact with DERL1. Interacts with PLAA, VCP and YOD1; may form a complex involved in macroautophagy. Interacts with LMAN1. Widely expressed (at protein level). Highest expression in brain (at protein level).

Its subcellular location is the cytoplasm. The protein localises to the cytosol. The protein resides in the membrane. It is found in the nucleus. It localises to the cytoskeleton. Its subcellular location is the microtubule organizing center. The protein localises to the centrosome. The protein resides in the early endosome membrane. It is found in the late endosome membrane. It localises to the lysosome membrane. Its function is as follows. May negatively regulate the ATPase activity of VCP, an ATP-driven segregase that associates with different cofactors to control a wide variety of cellular processes. As a cofactor of VCP, it may play a role in the transport of CAV1 to lysosomes for degradation. It may also play a role in endoplasmic reticulum-associated degradation (ERAD) of misfolded proteins. Together with VCP and other cofactors, it may play a role in macroautophagy, regulating for instance the clearance of damaged lysosomes. This is UBX domain-containing protein 6 from Mus musculus (Mouse).